The chain runs to 262 residues: Tetratricopeptide repeat protein 33 (262 aa).

Positions alanine 17–lysine 63 are disordered. TPR repeat units follow at residues serine 59 to aspartate 92, alanine 93 to serine 126, and tryptophan 127 to asparagine 160. Serine 197 carries the phosphoserine modification.

The protein is Tetratricopeptide repeat protein 33 (Ttc33) of Mus musculus (Mouse).